Consider the following 131-residue polypeptide: Small ribosomal subunit protein uS8 (131 aa).

It belongs to the universal ribosomal protein uS8 family. Part of the 30S ribosomal subunit. Contacts proteins S5 and S12.

Functionally, one of the primary rRNA binding proteins, it binds directly to 16S rRNA central domain where it helps coordinate assembly of the platform of the 30S subunit. The sequence is that of Small ribosomal subunit protein uS8 from Methylobacillus flagellatus (strain ATCC 51484 / DSM 6875 / VKM B-1610 / KT).